The chain runs to 137 residues: Protein MGF 110-7L (137 aa).

Residues 1–20 form the signal peptide; it reads MLVIILGIIGLLASSNLVSS. N-linked (GlcNAc...) asparagine; by host glycans are attached at residues Asn-69, Asn-70, and Asn-105.

The protein belongs to the asfivirus MGF 110 family.

Functionally, plays a role in virus cell tropism, and may be required for efficient virus replication in macrophages. The chain is Protein MGF 110-7L from African swine fever virus (isolate Tick/South Africa/Pretoriuskop Pr4/1996) (ASFV).